The sequence spans 286 residues: Glycine--tRNA ligase alpha subunit (286 aa).

Belongs to the class-II aminoacyl-tRNA synthetase family. As to quaternary structure, tetramer of two alpha and two beta subunits.

The protein localises to the cytoplasm. It catalyses the reaction tRNA(Gly) + glycine + ATP = glycyl-tRNA(Gly) + AMP + diphosphate. This Campylobacter concisus (strain 13826) protein is Glycine--tRNA ligase alpha subunit.